Here is a 356-residue protein sequence, read N- to C-terminus: 1-acyl-sn-glycerol-3-phosphate acyltransferase LPAT1, chloroplastic (356 aa).

A chloroplast-targeting transit peptide spans 1–56; the sequence is MDVASARSISSHPSYYGKPICSSQSSLIRISRDKVCCFGRISNGMTSFTTSLHAVP. The helical transmembrane segment at 127–147 threads the bilayer; it reads GIFFCVVAGISATFLIVLMII. The short motif at 202 to 207 is the HXXXXD motif element; it reads HQSFLD. Residues 224 to 244 form a helical membrane-spanning segment; the sequence is TGIFVIPIIGWAMSMMGVVPL.

Belongs to the 1-acyl-sn-glycerol-3-phosphate acyltransferase family. Widely expressed. Expressed at higher level in leaves. Expressed at lower level in silique walls compared to leaves.

The protein resides in the plastid. It is found in the chloroplast membrane. The enzyme catalyses a fatty acyl-[ACP] + a 1-acyl-sn-glycero-3-phosphate = a 1,2-diacyl-sn-glycero-3-phosphate + holo-[ACP]. It carries out the reaction a 1-acyl-sn-glycero-3-phosphate + an acyl-CoA = a 1,2-diacyl-sn-glycero-3-phosphate + CoA. Its pathway is phospholipid metabolism; CDP-diacylglycerol biosynthesis; CDP-diacylglycerol from sn-glycerol 3-phosphate: step 2/3. Plastidial enzyme of the prokaryotic glycerol-3-phosphate pathway that converts lysophosphatidic acid (LPA) into phosphatidic acid by incorporating an acyl moiety at position sn-2. Utilizes palmitoyl-ACP (16:0-ACP) to produce phosphatidic acid containing a saturated group at position sn-2, which is characteristic of lipids synthesized by the prokaryotic pathway. In vitro, can use 16:0-CoA as acyl donor. Essential for embryo development during the transition from the globular to the heart stage when chloroplasts begin to form. This chain is 1-acyl-sn-glycerol-3-phosphate acyltransferase LPAT1, chloroplastic, found in Arabidopsis thaliana (Mouse-ear cress).